Consider the following 503-residue polypeptide: Aminoaldehyde dehydrogenase 2, peroxisomal (503 aa).

Positions 28, 99, and 189 each coordinate Na(+). Residue 238 to 245 coordinates NAD(+); sequence GSTMTGSK. E260 acts as the Proton acceptor in catalysis. The NAD(+) site is built by C294 and E393. Catalysis depends on C294, which acts as the Nucleophile. A Microbody targeting signal motif is present at residues 501-503; that stretch reads SKL.

Belongs to the aldehyde dehydrogenase family. As to expression, expressed in leaves, flowers and fruits.

The protein resides in the peroxisome. It catalyses the reaction 4-aminobutanal + NAD(+) + H2O = 4-aminobutanoate + NADH + 2 H(+). The enzyme catalyses 3-aminopropanal + NAD(+) + H2O = beta-alanine + NADH + 2 H(+). The protein operates within amine and polyamine biosynthesis; betaine biosynthesis via choline pathway; betaine from betaine aldehyde: step 1/1. Its function is as follows. Dehydrogenase that catalyzes the oxidation of several aminoaldehydes. Metabolizes and detoxifies aldehyde products of polyamine degradation to non-toxic amino acids. Catalyzes the oxidation of 4-aminobutanal and 3-aminopropanal to 4-aminobutanoate and beta-alanine, respectively. The protein is Aminoaldehyde dehydrogenase 2, peroxisomal of Malus domestica (Apple).